Consider the following 65-residue polypeptide: Large ribosomal subunit protein bL35 (65 aa).

The tract at residues 1–22 (MPKIKTLRSAAKRFKKTASGKF) is disordered. The span at 10-22 (AAKRFKKTASGKF) shows a compositional bias: basic residues.

This sequence belongs to the bacterial ribosomal protein bL35 family.

This Buchnera aphidicola subsp. Schizaphis graminum (strain Sg) protein is Large ribosomal subunit protein bL35.